A 232-amino-acid polypeptide reads, in one-letter code: Large ribosomal subunit protein uL3 (232 aa).

The protein belongs to the universal ribosomal protein uL3 family. In terms of assembly, part of the 50S ribosomal subunit. Forms a cluster with proteins L14 and L19.

One of the primary rRNA binding proteins, it binds directly near the 3'-end of the 23S rRNA, where it nucleates assembly of the 50S subunit. The polypeptide is Large ribosomal subunit protein uL3 (Hydrogenobaculum sp. (strain Y04AAS1)).